A 169-amino-acid chain; its full sequence is CRISPR system Cmr subunit Cmr5 (169 aa).

This sequence belongs to the CRISPR system Cmr5 family. Monomer in isolation. Part of the type III-B Cmr ribonucleoprotein (RNP) complex, an elongated RNP with Cmr2 and Cmr3 as the base, with Cmr4 and Cmr5 forming a helical core along the mature crRNA (39 or 45 nt in length), while the complex is capped by Cmr6 and Cmr1. The 5' end of the crRNA is bound to Cmr2 and Cmr3, while Cmr6 and a Cmr1 subunit (Cmr1-1 or Cmr1-2) cap the 3' end of the crRNA. The target RNA lies antiparallel to the crRNA, with its 5' end near Cmr1 and Cmr6 and its 3' end near Cmr2 and Cmr3; major target cleavage occurs nears the junction of Cmr1/Cmr6 and Cmr4/Cmr, with minor cleavage occurring at 6 nt intervals which coincide with the proposed spacing of Cmr4 subunits. Interacts with Cmr4. Interacts with Cmr2, Cmr4 and Cmr6.

Its subcellular location is the cytoplasm. CRISPR (clustered regularly interspaced short palindromic repeat), is an adaptive immune system that provides protection against mobile genetic elements (viruses, transposable elements and conjugative plasmids). CRISPR clusters contain sequences complementary to antecedent mobile elements and target invading nucleic acids. CRISPR clusters are transcribed and processed into CRISPR RNA (crRNA), formerly called psiRNA (prokaryotic silencing) in this organism. Part of the Cmr ribonucleoprotein complex which has divalent cation-dependent endoribonuclease activity specific for ssRNA complementary to the crRNA (target NRA), generating 5' hydroxy- and 3' phosphate or 2'-3' cyclic phosphate termini. Cmr4 is probably the subunit that cleaves target RNA. Cmr complex does not cleave ssDNA complementary to the crRNA. Cleavage of invading RNA is guided by the crRNA; substrate cleavage occurs a fixed distance (14 nt) from the 3' end of the crRNA. In vitro reconstitution shows Cmr1-2 and Cmr5 are not absolutely necessary for target cleavage. In Pyrococcus furiosus (strain ATCC 43587 / DSM 3638 / JCM 8422 / Vc1), this protein is CRISPR system Cmr subunit Cmr5.